We begin with the raw amino-acid sequence, 355 residues long: Uroporphyrinogen decarboxylase (355 aa).

Residues 27–31 (RQAGR), D78, Y155, S210, and H328 contribute to the substrate site.

The protein belongs to the uroporphyrinogen decarboxylase family. In terms of assembly, homodimer.

The protein resides in the cytoplasm. It carries out the reaction uroporphyrinogen III + 4 H(+) = coproporphyrinogen III + 4 CO2. It participates in porphyrin-containing compound metabolism; protoporphyrin-IX biosynthesis; coproporphyrinogen-III from 5-aminolevulinate: step 4/4. Its function is as follows. Catalyzes the decarboxylation of four acetate groups of uroporphyrinogen-III to yield coproporphyrinogen-III. In Azotobacter vinelandii (strain DJ / ATCC BAA-1303), this protein is Uroporphyrinogen decarboxylase.